The sequence spans 150 residues: L-alanine exporter AlaE (150 aa).

A run of 4 helical transmembrane segments spans residues 17–37, 48–68, 86–106, and 111–131; these read FAMVVFCFITGMFIEILISGM, LSIPVNIAIAWPYGVFRDFML, LVAYVTFQSPAYAMILLVVGA, and IITAVSSNVVVSCVMGVFYGY.

Belongs to the AlaE exporter family.

It is found in the cell inner membrane. Functionally, exports L-alanine. The chain is L-alanine exporter AlaE from Aliivibrio fischeri (strain ATCC 700601 / ES114) (Vibrio fischeri).